The following is a 495-amino-acid chain: Beta-galactoside alpha-2,6-sialyltransferase 2 (495 aa).

Residues 1-10 (MKPHLKQWRQ) lie on the Cytoplasmic side of the membrane. The helical; Signal-anchor for type II membrane protein transmembrane segment at 11-31 (GMLCGVFAWGLFFVVIFLYFT) threads the bilayer. At 32 to 495 (DSSPAKPAPS…LQAVRCPPGA (464 aa)) the chain is on the lumenal side. 2 disordered regions span residues 63-90 (GASE…LRTW) and 107-165 (GRTS…EDGE). Over residues 134–143 (PEGARPPRAA) the composition is skewed to low complexity. Positions 144–153 (PGRRAKRGPR) are enriched in basic residues. 3 cysteine pairs are disulfide-bonded: cysteine 225-cysteine 491, cysteine 268-cysteine 420, and cysteine 438-cysteine 449. 2 N-linked (GlcNAc...) asparagine glycosylation sites follow: asparagine 279 and asparagine 309.

Belongs to the glycosyltransferase 29 family.

Its subcellular location is the golgi apparatus. The protein resides in the golgi stack membrane. The enzyme catalyses a beta-D-galactoside + CMP-N-acetyl-beta-neuraminate = an N-acetyl-alpha-neuraminyl-(2-&gt;6)-beta-D-galactosyl derivative + CMP + H(+). In terms of biological role, transfers sialic acid from the donor of substrate CMP-sialic acid to galactose containing acceptor substrates. Has alpha-2,6-sialyltransferase activity toward oligosaccharides that have the Gal-beta-1,4-GlcNAc sequence at the non-reducing end of their carbohydrate groups, but it has weak or no activities toward glycoproteins and glycolipids. The protein is Beta-galactoside alpha-2,6-sialyltransferase 2 (ST6GAL2) of Bos taurus (Bovine).